The following is a 445-amino-acid chain: Glycine--tRNA ligase (445 aa).

2 residues coordinate substrate: Arg97 and Glu145. ATP contacts are provided by residues 177–179, 187–192, 262–263, and 308–311; these read RNE, FRTCEF, EI, and GLTR. Residue 192–196 participates in substrate binding; the sequence is FEQME. 304–308 contacts substrate; the sequence is ETSAG.

Belongs to the class-II aminoacyl-tRNA synthetase family. In terms of assembly, homodimer.

The protein localises to the cytoplasm. It catalyses the reaction tRNA(Gly) + glycine + ATP = glycyl-tRNA(Gly) + AMP + diphosphate. In terms of biological role, catalyzes the attachment of glycine to tRNA(Gly). The chain is Glycine--tRNA ligase from Borreliella afzelii (strain PKo) (Borrelia afzelii).